Here is a 90-residue protein sequence, read N- to C-terminus: UPF0335 protein bsl7135 (90 aa).

Belongs to the UPF0335 family.

This chain is UPF0335 protein bsl7135, found in Bradyrhizobium diazoefficiens (strain JCM 10833 / BCRC 13528 / IAM 13628 / NBRC 14792 / USDA 110).